We begin with the raw amino-acid sequence, 213 residues long: Imidazole glycerol phosphate synthase subunit HisH (213 aa).

One can recognise a Glutamine amidotransferase type-1 domain in the interval 4 to 211 (NIGLIDYGMG…LAWLKKETKD (208 aa)). The Nucleophile role is filled by Cys82. Catalysis depends on residues His186 and Glu188.

In terms of assembly, heterodimer of HisH and HisF.

It is found in the cytoplasm. It carries out the reaction 5-[(5-phospho-1-deoxy-D-ribulos-1-ylimino)methylamino]-1-(5-phospho-beta-D-ribosyl)imidazole-4-carboxamide + L-glutamine = D-erythro-1-(imidazol-4-yl)glycerol 3-phosphate + 5-amino-1-(5-phospho-beta-D-ribosyl)imidazole-4-carboxamide + L-glutamate + H(+). The catalysed reaction is L-glutamine + H2O = L-glutamate + NH4(+). It participates in amino-acid biosynthesis; L-histidine biosynthesis; L-histidine from 5-phospho-alpha-D-ribose 1-diphosphate: step 5/9. Functionally, IGPS catalyzes the conversion of PRFAR and glutamine to IGP, AICAR and glutamate. The HisH subunit catalyzes the hydrolysis of glutamine to glutamate and ammonia as part of the synthesis of IGP and AICAR. The resulting ammonia molecule is channeled to the active site of HisF. The protein is Imidazole glycerol phosphate synthase subunit HisH of Prochlorococcus marinus (strain SARG / CCMP1375 / SS120).